Here is a 324-residue protein sequence, read N- to C-terminus: Bacilliredoxin reductase Bdr (324 aa).

Residue Cys-220 is modified to S-bacillithiol cysteine disulfide.

Interacts with BrxC. FAD is required as a cofactor. Post-translationally, C-terminal Cys can react with bacillithiol (BSH) to form mixed disulfides. S-bacillithiolation protects Cys residues against overoxidation by acting as a redox switch in response to oxidative stress.

S-bacillithiolation is the formation of mixed disulfide bonds between protein thiols and the general thiol reductant bacillithiol (BSH) under oxidative stress. BSH is an equivalent of glutathione (GSH) in Firmicutes. This protein is a NADPH-dependent bacilliredoxin reductase, which debacillithiolates (removes BSH) the S-bacillithiolated BrxB (BrxB-SSB), and to a lesser extent BrxC (BrxC-SSB). Involved in a redox cascade increasing the efficacy of BrxB function by reducing BrxB-SSB and thus reactivating it. Has NADPH-dependent oxidase activity under aerobic conditions producing hydrogen peroxide (H(2)O(2)). The protein is Bacilliredoxin reductase Bdr of Bacillus subtilis (strain 168).